We begin with the raw amino-acid sequence, 384 residues long: PqqA peptide cyclase (384 aa).

Residues 5–220 (VGLPLWLLAE…TNEYREKLKA (216 aa)) form the Radical SAM core domain. The [4Fe-4S] cluster site is built by cysteine 19, cysteine 23, and cysteine 26.

It belongs to the radical SAM superfamily. PqqE family. As to quaternary structure, interacts with PqqD. The interaction is necessary for activity of PqqE. [4Fe-4S] cluster is required as a cofactor.

The enzyme catalyses [PQQ precursor protein] + S-adenosyl-L-methionine = E-Y cross-linked-[PQQ precursor protein] + 5'-deoxyadenosine + L-methionine + H(+). The protein operates within cofactor biosynthesis; pyrroloquinoline quinone biosynthesis. In terms of biological role, catalyzes the cross-linking of a glutamate residue and a tyrosine residue in the PqqA protein as part of the biosynthesis of pyrroloquinoline quinone (PQQ). In Acinetobacter baumannii (strain AB0057), this protein is PqqA peptide cyclase.